We begin with the raw amino-acid sequence, 515 residues long: RNA-splicing ligase RtcB homolog (515 aa).

Residues Asp-121, Cys-124, His-229, His-269, and His-363 each coordinate Mn(2+). GMP is bound at residue 228-232 (NHYGE). GMP contacts are provided by residues 363-364 (HN), 412-415 (GGTM), Ser-419, 438-441 (HGSG), and Lys-514. The active-site GMP-histidine intermediate is the His-438.

The protein belongs to the RtcB family. As to quaternary structure, catalytic component of the tRNA-splicing ligase complex. Mn(2+) serves as cofactor.

The enzyme catalyses a 3'-end 3'-phospho-ribonucleotide-RNA + a 5'-end dephospho-ribonucleoside-RNA + GTP = a ribonucleotidyl-ribonucleotide-RNA + GMP + diphosphate. The catalysed reaction is a 3'-end 2',3'-cyclophospho-ribonucleotide-RNA + a 5'-end dephospho-ribonucleoside-RNA + GTP + H2O = a ribonucleotidyl-ribonucleotide-RNA + GMP + diphosphate + H(+). In terms of biological role, catalytic subunit of the tRNA-splicing ligase complex that acts by directly joining spliced tRNA halves to mature-sized tRNAs by incorporating the precursor-derived splice junction phosphate into the mature tRNA as a canonical 3',5'-phosphodiester. May act as an RNA ligase with broad substrate specificity, and may function toward other RNAs. This chain is RNA-splicing ligase RtcB homolog, found in Theileria annulata.